Consider the following 330-residue polypeptide: Probable L-asparaginase (330 aa).

One can recognise an Asparaginase/glutaminase domain in the interval 6 to 330; the sequence is PTIALLATGG…EKIQEMFEEY (325 aa). T16 (O-isoaspartyl threonine intermediate) is an active-site residue. Substrate-binding positions include S62 and 95 to 96; that span reads TD.

It belongs to the asparaginase 1 family.

The protein resides in the cytoplasm. It catalyses the reaction L-asparagine + H2O = L-aspartate + NH4(+). The chain is Probable L-asparaginase (ansA) from Helicobacter pylori (strain ATCC 700392 / 26695) (Campylobacter pylori).